The sequence spans 493 residues: Mitochondrial distribution and morphology protein 10 (493 aa).

The protein belongs to the MDM10 family. Component of the ER-mitochondria encounter structure (ERMES) or MDM complex, composed of MMM1, MDM10, MDM12 and MDM34. Associates with the mitochondrial outer membrane sorting assembly machinery SAM(core) complex, which consists of SAM35, SAM37 and SAM50, to form a SAM(holo) complex.

Its subcellular location is the mitochondrion outer membrane. Component of the ERMES/MDM complex, which serves as a molecular tether to connect the endoplasmic reticulum and mitochondria. Components of this complex are involved in the control of mitochondrial shape and protein biogenesis and may function in phospholipid exchange. MDM10 is involved in the late assembly steps of the general translocase of the mitochondrial outer membrane (TOM complex). Functions in the TOM40-specific route of the assembly of outer membrane beta-barrel proteins, including the association of TOM40 with the receptor TOM22 and small TOM proteins. Can associate with the SAM(core) complex as well as the MDM12-MMM1 complex, both involved in late steps of the major beta-barrel assembly pathway, that is responsible for biogenesis of all outer membrane beta-barrel proteins. May act as a switch that shuttles between both complexes and channels precursor proteins into the TOM40-specific pathway. Plays a role in mitochondrial morphology and in the inheritance of mitochondria. The sequence is that of Mitochondrial distribution and morphology protein 10 from Saccharomyces cerevisiae (strain RM11-1a) (Baker's yeast).